The following is a 630-amino-acid chain: Plastin-1 (630 aa).

M1 bears the N-acetylmethionine mark. EF-hand domains follow at residues 11 to 46 (EELE…ASLP) and 51 to 86 (KVRE…LKSK). Residues D24, D26, S28, Y30, E35, D64, N66, D68, K70, and E75 each contribute to the Ca(2+) site. 2 actin-binding regions span residues 108–381 (TSSI…CLHK) and 382–626 (PDNN…GKGL). 4 consecutive Calponin-homology (CH) domains span residues 122–238 (EEEK…KVGL), 266–377 (LSPE…NTYP), 396–505 (SKEE…RRYT), and 517–626 (KVTD…GKGL).

In terms of assembly, monomer. Phosphorylated. As to expression, in the inner ear, it is expressed in the organ of Corti. Abundant in the utricle (at protein level).

The protein localises to the cytoplasm. The protein resides in the cell projection. It localises to the stereocilium. Functionally, actin-bundling protein. In the inner ear, it is required for stereocilia formation. Mediates liquid packing of actin filaments that is necessary for stereocilia to grow to their proper dimensions. The sequence is that of Plastin-1 (Pls1) from Mus musculus (Mouse).